Consider the following 201-residue polypeptide: UPF0376 protein F10G2.1 (201 aa).

Residues 1–3 (MKH) lie on the Cytoplasmic side of the membrane. The helical; Signal-anchor for type II membrane protein transmembrane segment at 4–24 (FLLLAIIGILFLGSTYGASVA) threads the bilayer. At 25–201 (TEKLKASNCT…LLECDFRNIQ (177 aa)) the chain is on the extracellular side. Asn32 and Asn124 each carry an N-linked (GlcNAc...) asparagine glycan.

This sequence belongs to the UPF0376 family.

It localises to the membrane. This Caenorhabditis elegans protein is UPF0376 protein F10G2.1.